The chain runs to 325 residues: UPF0164 protein TP_0856 (325 aa).

An N-terminal signal peptide occupies residues methionine 1–alanine 28.

The protein belongs to the UPF0164 family.

The sequence is that of UPF0164 protein TP_0856 from Treponema pallidum (strain Nichols).